An 86-amino-acid chain; its full sequence is UPF0457 protein SSP0714 (86 aa).

It belongs to the UPF0457 family.

This is UPF0457 protein SSP0714 from Staphylococcus saprophyticus subsp. saprophyticus (strain ATCC 15305 / DSM 20229 / NCIMB 8711 / NCTC 7292 / S-41).